A 140-amino-acid polypeptide reads, in one-letter code: MACTLRLTIAALVLLGICHLSRPVAAYQRCSRYWYSWLPYDIERDRYDDGYRKCCYCRNAWTPWQCREDEQFERMRCGSRYYTLCCYTDDDNGNGNGNGNGYGNGNGNGNGNNYLKYLFGGNGNGNGEYWEEYIDERYDK.

Residues 1-25 form the signal peptide; the sequence is MACTLRLTIAALVLLGICHLSRPVA.

Belongs to the N16 matrix protein family. Heterooligomer; disulfide-linked. Pif97, Pif80, N16 and other proteins form a complex. In terms of tissue distribution, component of conchiolin, the organic matrix of nacre. Only expressed in the dorsal region of the mantle.

It is found in the secreted. The protein resides in the extracellular space. Its subcellular location is the extracellular matrix. In terms of biological role, may be specifically involved in the formation of the nacreous layer. The sequence is that of N14 matrix protein from Pinctada maxima (Silver-lipped pearl oyster).